The following is a 122-amino-acid chain: Large ribosomal subunit protein uL14 (122 aa).

It belongs to the universal ribosomal protein uL14 family. Part of the 50S ribosomal subunit. Forms a cluster with proteins L3 and L19. In the 70S ribosome, L14 and L19 interact and together make contacts with the 16S rRNA in bridges B5 and B8.

In terms of biological role, binds to 23S rRNA. Forms part of two intersubunit bridges in the 70S ribosome. The protein is Large ribosomal subunit protein uL14 of Methylobacillus flagellatus (strain ATCC 51484 / DSM 6875 / VKM B-1610 / KT).